Here is a 971-residue protein sequence, read N- to C-terminus: MAPTRKSKSVNKRFTNEASPDINFGSASKTKQRKKKLADKLGPQWTKRELVRFYDAYRKYVGDWKKVAAAVRNNRSVEMVETLFCMNRAYLSLPEGTASVAGLIAMMTDHYSVMEGSESEGEDHDASEVTRKHLKRKRPQVLPSDFREEVVPPHSVASVEGCLSFLKQTQAYEKRQRATGKRTPRFLVAITHERDDIEDFSPPNKRAKKQLDADDDASRRGGGSPYRRKELSEITPTRLRKTSQAQEAQFKHPDSSMFENGVRDRWHKKGAADRDGALLMDMEGLVTQKEKIVRVEEAEGNYSDDDDGLGALKTLAEMSASLAPAGLLESESSPHWEEERKTNNVDKKSNTLETVSTSHHREKAKQAGLEDNLLHAISAPDKRKPKSVPESVDGNVVSIEELRTSSRKRKPKFQVLDVVAPKESTQDKSLYTKESAEVDSLKTPVKARRSSQGPAKQLKTAKTTVESSSASDKKITGPDAVVPATQVSASGPETLPQKPPNRRKISLKKSLQERAKSLETTHDKPRSFKKLSEHELLQEKLSNCLSYPLVRRWCIYEWFYSAIDYPWFAKMEFTDYLNHVGLGHAPRLTRVEWSVIKSSLGRPRRLSQRFLQDERDKLQEYRESVRKHYTELRGCATGVLHTDLARPLSVGNRVIAIHPKTREIRDGKILTVDHNKCNVLFDELGVELVMDIDCMPLNPLEYMPEGLRRQIDKCLAICKEARLNRHPSSDASVLFSPSVLENVNFSMNPPPAKQDDIREPVLYGKVIATNTTDQSIVINSKVTGTEIQRTLALQHTSDAQEMEPEMIEIVIESKSIAQAMVDAAIKAASSGKNNEDSENMVHQALSSIGEHQPLDNSIVPGIKHQEYTNGSLDHHSLNTAEPMSNGFISQEGSGKNKTPMPSELITSCVASWLMMQMISKKQYPPADVAQLMDTVVNDLQPRCPQNMPIYREIQTCMGLIKTQIMALVRTS.

Basic residues predominate over residues M1–N11. Disordered stretches follow at residues M1 to K40, S117 to K137, I197 to N260, G326 to D371, and P421 to L507. The 59-residue stretch at K40–A98 folds into the SANT domain. 3 stretches are compositionally biased toward basic and acidic residues: residues K209–R219, S332–N350, and S424–S440. A compositionally biased stretch (polar residues) spans S450–A470.

As to expression, expressed ubiquitously in vegetative and reproductive tissues.

The protein resides in the nucleus. The sequence is that of Protein ALWAYS EARLY 1 (ALY1) from Arabidopsis thaliana (Mouse-ear cress).